The primary structure comprises 195 residues: Probable GTP-binding protein EngB (195 aa).

The region spanning 24–195 (GLSEVGLSGR…QIWNVIEKYL (172 aa)) is the EngB-type G domain. GTP-binding positions include 32 to 39 (GRSNVGKS), 59 to 63 (GKTQT), 77 to 80 (DVPG), 144 to 147 (TKED), and 176 to 178 (YSS). 2 residues coordinate Mg(2+): S39 and T61.

Belongs to the TRAFAC class TrmE-Era-EngA-EngB-Septin-like GTPase superfamily. EngB GTPase family. Requires Mg(2+) as cofactor.

In terms of biological role, necessary for normal cell division and for the maintenance of normal septation. The polypeptide is Probable GTP-binding protein EngB (Staphylococcus saprophyticus subsp. saprophyticus (strain ATCC 15305 / DSM 20229 / NCIMB 8711 / NCTC 7292 / S-41)).